The sequence spans 320 residues: Cytochrome f (320 aa).

The signal sequence occupies residues 1–35 (MQTRNTFSWIREEITRSISVSLIIYIITWASISSA). Heme is bound by residues Tyr36, Cys56, Cys59, and His60. A helical transmembrane segment spans residues 286–305 (VQGLLFFLGSVVLAQIFLVL).

This sequence belongs to the cytochrome f family. In terms of assembly, the 4 large subunits of the cytochrome b6-f complex are cytochrome b6, subunit IV (17 kDa polypeptide, petD), cytochrome f and the Rieske protein, while the 4 small subunits are PetG, PetL, PetM and PetN. The complex functions as a dimer. Requires heme as cofactor.

It is found in the plastid. The protein localises to the chloroplast thylakoid membrane. Its function is as follows. Component of the cytochrome b6-f complex, which mediates electron transfer between photosystem II (PSII) and photosystem I (PSI), cyclic electron flow around PSI, and state transitions. This Arabidopsis thaliana (Mouse-ear cress) protein is Cytochrome f (petA).